The primary structure comprises 708 residues: Capsid scaffolding protein (708 aa).

Active-site charge relay system residues include His-63, Ser-132, and His-157. Disordered regions lie at residues 269 to 339 (ASAE…MSHP), 455 to 565 (HPSY…QQQR), and 593 to 619 (ALPS…SGGG). Residues 284–293 (PAAGARVPSS) show a composition bias toward low complexity. The span at 294-311 (SPSPPVEPPSPVQPPALP) shows a compositional bias: pro residues. Low complexity predominate over residues 326 to 339 (SPSEPAEAASMSHP). Positions 333-352 (AASMSHPLSAAVPAATAPPG) are interaction with pAP. Over residues 498–513 (KQHRHGGSGGHNKRRK) the composition is skewed to basic residues. Short sequence motifs (nuclear localization signal) lie at residues 510-515 (KRRKET) and 537-543 (RARKRLK). Over residues 593–611 (ALPSAASSSPTTTTVCTPT) the composition is skewed to low complexity. An interaction with major capsid protein region spans residues 688-708 (PPKDMVDLNRRIFVAALNKLE).

This sequence belongs to the herpesviridae capsid scaffolding protein family. In terms of assembly, homomultimer. Interacts with major capsid protein. Exists in a monomer-dimer equilibrium with the dimer being the active species. Capsid scaffolding protein is cleaved by assemblin after formation of the spherical procapsid. As a result, the capsid obtains its mature, icosahedral shape. Cleavages occur at two or more sites: release (R-site) and maturation (M-site).

The protein localises to the host cytoplasm. Its subcellular location is the host nucleus. It carries out the reaction Cleaves -Ala-|-Ser- and -Ala-|-Ala- bonds in the scaffold protein.. Acts as a scaffold protein by binding major capsid protein in the cytoplasm, inducing the nuclear localization of both proteins. Multimerizes in the nucleus such as major capsid protein forms the icosahedral T=16 capsid. Autocatalytic cleavage releases the assembly protein, and subsequently abolishes interaction with major capsid protein. Cleavages products are evicted from the capsid before or during DNA packaging. Functionally, protease that plays an essential role in virion assembly within the nucleus. Catalyzes the cleavage of the assembly protein after formation of the spherical procapsid. By that cleavage, the capsid matures and gains its icosahedral shape. The cleavage sites seem to include -Ala-Ser-, -Ala-Ala-, as well as Ala-Thr bonds. Assemblin and cleavages products are evicted from the capsid before or during DNA packaging. In terms of biological role, plays a major role in capsid assembly. Acts as a scaffold protein by binding major capsid protein. Multimerizes in the nucleus such as major capsid protein forms the icosahedral T=16 capsid. Cleaved by assemblin after capsid completion. The cleavages products are evicted from the capsid before or during DNA packaging. This is Capsid scaffolding protein (UL80) from Homo sapiens (Human).